A 630-amino-acid chain; its full sequence is Putative lipase atg15 (630 aa).

The Cytoplasmic segment spans residues 1-20 (MKSSQRRIKRHAMRDMSIST). A helical; Signal-anchor for type II membrane protein transmembrane segment spans residues 21 to 40 (LLLSVVLLPSVVSANDHVYF). Residues 41-630 (NPPSPGSPFL…WGSDIEHYEI (590 aa)) lie on the Lumenal side of the membrane. N200, N222, N280, and N304 each carry an N-linked (GlcNAc...) asparagine glycan. S320 functions as the Charge relay system in the catalytic mechanism. N466 is a glycosylation site (N-linked (GlcNAc...) asparagine). Polar residues predominate over residues 577–589 (SVTAPPFSTSTSS). Positions 577–599 (SVTAPPFSTSTSSDHVRADHSIG) are disordered.

Belongs to the AB hydrolase superfamily. Lipase family. As to quaternary structure, binds to both phosphatidylinositol (PI) and phosphatidylinositol 3,5-bisphosphate (PIP2).

The protein resides in the endosome. It is found in the multivesicular body membrane. Its subcellular location is the prevacuolar compartment membrane. The enzyme catalyses a triacylglycerol + H2O = a diacylglycerol + a fatty acid + H(+). Functionally, lipase which is essential for lysis of subvacuolar cytoplasm to vacuole targeted bodies and intravacuolar autophagic bodies. Involved in the lysis of intravacuolar multivesicular body (MVB) vesicles. The intravacuolar membrane disintegration by atg15 is critical to life span extension. This Aspergillus clavatus (strain ATCC 1007 / CBS 513.65 / DSM 816 / NCTC 3887 / NRRL 1 / QM 1276 / 107) protein is Putative lipase atg15 (atg15).